The primary structure comprises 270 residues: BPI fold-containing family A member 1 (270 aa).

Positions 1–19 (MFLVGSLVVLCGLLAQSTA) are cleaved as a signal peptide. Residues 104 to 109 (LVGGLL) form an important for surfactant activity and antibacterial properties region. The N-linked (GlcNAc...) asparagine glycan is linked to Asn174. Cys196 and Cys238 are oxidised to a cystine.

Belongs to the BPI/LBP/Plunc superfamily. Plunc family. Monomer. Interacts (via N-terminus) with SCNN1B, a subunit of the heterotrimeric epithelial sodium channel (ENaC); this inhibits proteolytic activation of ENaC. In terms of tissue distribution, detected in adult nasal epithelium, heart, lung, spleen, testis and salivary gland, and in embryonic nasal epithelium, lung, salivary gland and thymus.

It localises to the secreted. Its function is as follows. Lipid-binding protein which shows high specificity for the surfactant phospholipid dipalmitoylphosphatidylcholine (DPPC). Plays a role in the innate immune responses of the upper airways. Reduces the surface tension in secretions from airway epithelia and inhibits the formation of biofilm by pathogenic Gram-negative bacteria, such as P.aeruginosa and K.pneumoniae. Negatively regulates proteolytic cleavage of SCNN1G, an event that is required for activation of the epithelial sodium channel (ENaC), and thereby contributes to airway surface liquid homeostasis and proper clearance of mucus. Plays a role in the airway inflammatory response after exposure to irritants. May attract macrophages and neutrophils. The polypeptide is BPI fold-containing family A member 1 (Bpifa1) (Rattus norvegicus (Rat)).